The sequence spans 120 residues: Large ribosomal subunit protein bL17 (120 aa).

Belongs to the bacterial ribosomal protein bL17 family. Part of the 50S ribosomal subunit. Contacts protein L32.

This Mesomycoplasma hyopneumoniae (strain 232) (Mycoplasma hyopneumoniae) protein is Large ribosomal subunit protein bL17.